Here is a 120-residue protein sequence, read N- to C-terminus: NAD(P)H-quinone oxidoreductase subunit 3, chloroplastic (120 aa).

The next 3 membrane-spanning stretches (helical) occupy residues Phe2–Ile22, Met64–Leu84, and Ile88–Leu108.

This sequence belongs to the complex I subunit 3 family. In terms of assembly, NDH is composed of at least 16 different subunits, 5 of which are encoded in the nucleus.

The protein resides in the plastid. It is found in the chloroplast thylakoid membrane. It catalyses the reaction a plastoquinone + NADH + (n+1) H(+)(in) = a plastoquinol + NAD(+) + n H(+)(out). The catalysed reaction is a plastoquinone + NADPH + (n+1) H(+)(in) = a plastoquinol + NADP(+) + n H(+)(out). In terms of biological role, NDH shuttles electrons from NAD(P)H:plastoquinone, via FMN and iron-sulfur (Fe-S) centers, to quinones in the photosynthetic chain and possibly in a chloroplast respiratory chain. The immediate electron acceptor for the enzyme in this species is believed to be plastoquinone. Couples the redox reaction to proton translocation, and thus conserves the redox energy in a proton gradient. This chain is NAD(P)H-quinone oxidoreductase subunit 3, chloroplastic, found in Oenothera biennis (German evening primrose).